A 269-amino-acid chain; its full sequence is Phosphonoacetaldehyde hydrolase (269 aa).

Asp-10 (nucleophile) is an active-site residue. Asp-10 and Ala-12 together coordinate Mg(2+). The Schiff-base intermediate with substrate role is filled by Lys-52. A Mg(2+)-binding site is contributed by Asp-186.

This sequence belongs to the HAD-like hydrolase superfamily. PhnX family. In terms of assembly, homodimer. The cofactor is Mg(2+).

It carries out the reaction phosphonoacetaldehyde + H2O = acetaldehyde + phosphate + H(+). Functionally, involved in phosphonate degradation. This is Phosphonoacetaldehyde hydrolase from Salmonella typhi.